A 333-amino-acid polypeptide reads, in one-letter code: Glycerol-3-phosphate dehydrogenase [NAD(P)+] 2 (333 aa).

NADPH is bound by residues serine 12, tryptophan 13, arginine 32, and lysine 106. Sn-glycerol 3-phosphate contacts are provided by lysine 106 and glycine 134. Position 138 (alanine 138) interacts with NADPH. Residues lysine 189, aspartate 242, serine 252, arginine 253, and asparagine 254 each contribute to the sn-glycerol 3-phosphate site. Lysine 189 functions as the Proton acceptor in the catalytic mechanism. Arginine 253 serves as a coordination point for NADPH. Valine 277 and glutamate 279 together coordinate NADPH.

It belongs to the NAD-dependent glycerol-3-phosphate dehydrogenase family.

The protein localises to the cytoplasm. The enzyme catalyses sn-glycerol 3-phosphate + NAD(+) = dihydroxyacetone phosphate + NADH + H(+). The catalysed reaction is sn-glycerol 3-phosphate + NADP(+) = dihydroxyacetone phosphate + NADPH + H(+). It functions in the pathway membrane lipid metabolism; glycerophospholipid metabolism. Its function is as follows. Catalyzes the reduction of the glycolytic intermediate dihydroxyacetone phosphate (DHAP) to sn-glycerol 3-phosphate (G3P), the key precursor for phospholipid synthesis. The protein is Glycerol-3-phosphate dehydrogenase [NAD(P)+] 2 of Sphingopyxis alaskensis (strain DSM 13593 / LMG 18877 / RB2256) (Sphingomonas alaskensis).